A 194-amino-acid chain; its full sequence is Histone H1.0 (194 aa).

The residue at position 1 (Met-1) is an N-acetylmethionine. A compositionally biased stretch (low complexity) spans 1–11; sequence MTENSTSAPAA. A disordered region spans residues 1–28; that stretch reads MTENSTSAPAAKPKRAKASKKSTDHPKY. Thr-2 bears the N-acetylthreonine; in Histone H1.0, N-terminally processed mark. One can recognise an H15 domain in the interval 24 to 97; it reads DHPKYSDMIV…GASGSFRLAK (74 aa). Arg-42 bears the Citrulline mark. A disordered region spans residues 86–194; the sequence is GVGASGSFRL…SSAKRASKKK (109 aa). Ser-104 carries the post-translational modification ADP-ribosylserine. Residues 105–194 are compositionally biased toward basic residues; the sequence is VAFKKTKKEV…SSAKRASKKK (90 aa).

This sequence belongs to the histone H1/H5 family. ADP-ribosylated on Ser-104 in response to DNA damage.

It is found in the nucleus. The protein localises to the chromosome. Functionally, histones H1 are necessary for the condensation of nucleosome chains into higher-order structures. The histones H1.0 are found in cells that are in terminal stages of differentiation or that have low rates of cell division. The sequence is that of Histone H1.0 (H1-0) from Mus musculus (Mouse).